Reading from the N-terminus, the 309-residue chain is 2-dehydro-3-deoxygluconokinase (309 aa).

Residues 28-32, Tyr-88, 102-104, and Arg-170 each bind substrate; these read GDTLN and YWR. ATP is bound by residues 168-170, 228-233, and 261-264; these read NYR, KRGADS, and AAGD. Asp-264 is a substrate binding site. Asp-264 functions as the Proton acceptor in the catalytic mechanism.

The protein belongs to the carbohydrate kinase PfkB family.

The catalysed reaction is 2-dehydro-3-deoxy-D-gluconate + ATP = 2-dehydro-3-deoxy-6-phospho-D-gluconate + ADP + H(+). It functions in the pathway carbohydrate acid metabolism; 2-dehydro-3-deoxy-D-gluconate degradation; D-glyceraldehyde 3-phosphate and pyruvate from 2-dehydro-3-deoxy-D-gluconate: step 1/2. Catalyzes the phosphorylation of 2-keto-3-deoxygluconate (KDG) to produce 2-keto-3-deoxy-6-phosphogluconate (KDPG). In Escherichia coli (strain K12), this protein is 2-dehydro-3-deoxygluconokinase (kdgK).